Here is a 495-residue protein sequence, read N- to C-terminus: MTADPDPPFVAVWNTVVAELNGDPAATGPRNGDGALPTLTPQQRAWLKLVKPLVITEGFALLSVPTPFVQNEIERHLREPIITALSRHLGQRVELGVRIATPSPEDDDPPPSPVIADIDEVDEDTEARVSAEETWPRYFSRPPETPAAEDPNAVSLNRRYTFDTFVIGASNRFAHAATLAIAEAPARAYNPLFIWGESGLGKTHLLHAAGNYAQRLFPGMRVKYVSTEEFTNDFINSLRDDRKASFKRSYRDIDVLLVDDIQFIEGKEGIQEEFFHTFNTLHNANKQIVISSDRPPKQLATLEDRLRTRFEWGLITDVQPPELETRIAILRKKAQMDRLDVPDDVLELIASSIERNIRELEGALIRVTAFASLNKTPIDKSLAEIVLRDLISDASTMQISTAAIMAATAEYFETTIEELRGPGKTRALAQSRQIAMYLCRELTDLSLPKIGQAFGRDHTTVMYAEKKIRGEMAERREVFDHVKELTTRIRQRAKR.

Residues Met-1 to Gln-91 are domain I, interacts with DnaA modulators. The segment at Gln-91–Val-154 is domain II. Positions Ser-155–Ala-371 are domain III, AAA+ region. ATP contacts are provided by Gly-199, Gly-201, Lys-202, and Thr-203. Residues Ser-372 to Arg-495 are domain IV, binds dsDNA.

The protein belongs to the DnaA family. As to quaternary structure, oligomerizes as a right-handed, spiral filament on DNA at oriC.

It localises to the cytoplasm. In terms of biological role, plays an essential role in the initiation and regulation of chromosomal replication. ATP-DnaA binds to the origin of replication (oriC) to initiate formation of the DNA replication initiation complex once per cell cycle. Binds the DnaA box (a 9 base pair repeat at the origin) and separates the double-stranded (ds)DNA. Forms a right-handed helical filament on oriC DNA; dsDNA binds to the exterior of the filament while single-stranded (ss)DNA is stabiized in the filament's interior. The ATP-DnaA-oriC complex binds and stabilizes one strand of the AT-rich DNA unwinding element (DUE), permitting loading of DNA polymerase. After initiation quickly degrades to an ADP-DnaA complex that is not apt for DNA replication. Binds acidic phospholipids. This chain is Chromosomal replication initiator protein DnaA, found in Mycobacterium sp. (strain JLS).